Consider the following 344-residue polypeptide: Biotin synthase (344 aa).

The Radical SAM core domain maps to 40 to 267 (AQVQVSTLLS…KSMVRLSAGR (228 aa)). [4Fe-4S] cluster-binding residues include cysteine 55, cysteine 59, and cysteine 62. Cysteine 99, cysteine 130, cysteine 190, and arginine 262 together coordinate [2Fe-2S] cluster.

This sequence belongs to the radical SAM superfamily. Biotin synthase family. Homodimer. Requires [4Fe-4S] cluster as cofactor. [2Fe-2S] cluster serves as cofactor.

It carries out the reaction (4R,5S)-dethiobiotin + (sulfur carrier)-SH + 2 reduced [2Fe-2S]-[ferredoxin] + 2 S-adenosyl-L-methionine = (sulfur carrier)-H + biotin + 2 5'-deoxyadenosine + 2 L-methionine + 2 oxidized [2Fe-2S]-[ferredoxin]. Its pathway is cofactor biosynthesis; biotin biosynthesis; biotin from 7,8-diaminononanoate: step 2/2. Its function is as follows. Catalyzes the conversion of dethiobiotin (DTB) to biotin by the insertion of a sulfur atom into dethiobiotin via a radical-based mechanism. The sequence is that of Biotin synthase from Xanthomonas euvesicatoria pv. vesicatoria (strain 85-10) (Xanthomonas campestris pv. vesicatoria).